The chain runs to 497 residues: Galactose/methyl galactoside import ATP-binding protein MglA 1 (497 aa).

ABC transporter domains lie at 6–243 (LEMR…VGRD) and 256–494 (GKVR…VMSM). 38–45 (GENGAGKS) is an ATP binding site.

The protein belongs to the ABC transporter superfamily. Galactose/methyl galactoside importer (TC 3.A.1.2.3) family. As to quaternary structure, the complex is composed of one ATP-binding protein (MglA), two transmembrane proteins (MglC) and a solute-binding protein (MglB).

It localises to the cell inner membrane. It catalyses the reaction D-galactose(out) + ATP + H2O = D-galactose(in) + ADP + phosphate + H(+). The catalysed reaction is methyl beta-D-galactoside(out) + ATP + H2O = methyl beta-D-galactoside(in) + ADP + phosphate + H(+). Part of the ABC transporter complex MglABC involved in galactose/methyl galactoside import. Responsible for energy coupling to the transport system. This chain is Galactose/methyl galactoside import ATP-binding protein MglA 1, found in Photobacterium profundum (strain SS9).